The following is a 215-amino-acid chain: Adenylate kinase (215 aa).

10-15 is a binding site for ATP; the sequence is GAGKGT. The tract at residues 30-59 is NMP; sequence STGDMFRAAMKNNTELGKKAKSFMDNGDLV. AMP contacts are provided by residues Thr-31, Arg-36, 57–59, 85–88, and Gln-92; these read DLV and GFPR. The tract at residues 126 to 163 is LID; it reads GRWICRTCGKTYHEIYNPPKVPGKCDLDGGELYQREDD. Arg-127 is an ATP binding site. Residues Cys-130 and Cys-133 each contribute to the Zn(2+) site. Position 136–137 (136–137) interacts with ATP; that stretch reads TY. 2 residues coordinate Zn(2+): Cys-150 and Asp-153. Arg-160 and Arg-171 together coordinate AMP. Position 199 (Gln-199) interacts with ATP.

It belongs to the adenylate kinase family. In terms of assembly, monomer.

The protein resides in the cytoplasm. The enzyme catalyses AMP + ATP = 2 ADP. It participates in purine metabolism; AMP biosynthesis via salvage pathway; AMP from ADP: step 1/1. In terms of biological role, catalyzes the reversible transfer of the terminal phosphate group between ATP and AMP. Plays an important role in cellular energy homeostasis and in adenine nucleotide metabolism. This is Adenylate kinase from Listeria innocua serovar 6a (strain ATCC BAA-680 / CLIP 11262).